Here is a 200-residue protein sequence, read N- to C-terminus: Probable molybdenum cofactor guanylyltransferase (200 aa).

GTP-binding positions include Leu9 to Gly11, Lys21, Asp69, and Asp100. Residue Asp100 participates in Mg(2+) binding.

The protein belongs to the MobA family. Requires Mg(2+) as cofactor.

It localises to the cytoplasm. It carries out the reaction Mo-molybdopterin + GTP + H(+) = Mo-molybdopterin guanine dinucleotide + diphosphate. Transfers a GMP moiety from GTP to Mo-molybdopterin (Mo-MPT) cofactor (Moco or molybdenum cofactor) to form Mo-molybdopterin guanine dinucleotide (Mo-MGD) cofactor. The sequence is that of Probable molybdenum cofactor guanylyltransferase from Bacillus mycoides (strain KBAB4) (Bacillus weihenstephanensis).